The following is a 626-amino-acid chain: Chaperone protein HtpG (626 aa).

The segment at 1 to 339 (MSQNQETRGF…SNDLPLNVSR (339 aa)) is a; substrate-binding. The interval 340-555 (EILQDNKITA…NDQMTTQMAK (216 aa)) is b. Positions 556–626 (LFAAAGQPVP…FIKRINKLLG (71 aa)) are c.

Belongs to the heat shock protein 90 family. Homodimer.

The protein localises to the cytoplasm. Functionally, molecular chaperone. Has ATPase activity. This Haemophilus influenzae (strain PittGG) protein is Chaperone protein HtpG.